We begin with the raw amino-acid sequence, 197 residues long: Imidazoleglycerol-phosphate dehydratase (197 aa).

Belongs to the imidazoleglycerol-phosphate dehydratase family.

Its subcellular location is the cytoplasm. The enzyme catalyses D-erythro-1-(imidazol-4-yl)glycerol 3-phosphate = 3-(imidazol-4-yl)-2-oxopropyl phosphate + H2O. It functions in the pathway amino-acid biosynthesis; L-histidine biosynthesis; L-histidine from 5-phospho-alpha-D-ribose 1-diphosphate: step 6/9. The polypeptide is Imidazoleglycerol-phosphate dehydratase (Halorhodospira halophila (strain DSM 244 / SL1) (Ectothiorhodospira halophila (strain DSM 244 / SL1))).